The sequence spans 113 residues: Large ribosomal subunit protein uL22 (113 aa).

Belongs to the universal ribosomal protein uL22 family. In terms of assembly, part of the 50S ribosomal subunit.

In terms of biological role, this protein binds specifically to 23S rRNA; its binding is stimulated by other ribosomal proteins, e.g. L4, L17, and L20. It is important during the early stages of 50S assembly. It makes multiple contacts with different domains of the 23S rRNA in the assembled 50S subunit and ribosome. The globular domain of the protein is located near the polypeptide exit tunnel on the outside of the subunit, while an extended beta-hairpin is found that lines the wall of the exit tunnel in the center of the 70S ribosome. The protein is Large ribosomal subunit protein uL22 of Chloroflexus aggregans (strain MD-66 / DSM 9485).